Here is a 142-residue protein sequence, read N- to C-terminus: Transcriptional regulator MraZ (142 aa).

SpoVT-AbrB domains lie at 5 to 47 and 76 to 119; these read EYQH…PLDE and ACEV…SKEK.

This sequence belongs to the MraZ family. Forms oligomers.

It is found in the cytoplasm. Its subcellular location is the nucleoid. This is Transcriptional regulator MraZ from Clostridium beijerinckii (strain ATCC 51743 / NCIMB 8052) (Clostridium acetobutylicum).